Reading from the N-terminus, the 185-residue chain is Ribosome-recycling factor (185 aa).

Belongs to the RRF family.

It localises to the cytoplasm. Responsible for the release of ribosomes from messenger RNA at the termination of protein biosynthesis. May increase the efficiency of translation by recycling ribosomes from one round of translation to another. The protein is Ribosome-recycling factor of Campylobacter concisus (strain 13826).